The chain runs to 792 residues: Phenylalanine--tRNA ligase beta subunit (792 aa).

The tRNA-binding domain occupies 39–154 (LYSFASVITA…EATPLGEDLA (116 aa)). One can recognise a B5 domain in the interval 403 to 480 (RELKEVALRP…ESWNIETQNP (78 aa)). Mg(2+)-binding residues include aspartate 456, aspartate 462, glutamate 465, and glutamate 466. Positions 695–791 (AIYPSSFRDL…LLTDTKGTIN (97 aa)) constitute an FDX-ACB domain.

The protein belongs to the phenylalanyl-tRNA synthetase beta subunit family. Type 1 subfamily. As to quaternary structure, tetramer of two alpha and two beta subunits. The cofactor is Mg(2+).

Its subcellular location is the cytoplasm. It catalyses the reaction tRNA(Phe) + L-phenylalanine + ATP = L-phenylalanyl-tRNA(Phe) + AMP + diphosphate + H(+). This chain is Phenylalanine--tRNA ligase beta subunit (pheT), found in Chlamydia pneumoniae (Chlamydophila pneumoniae).